We begin with the raw amino-acid sequence, 179 residues long: Large ribosomal subunit protein uL6 (179 aa).

It belongs to the universal ribosomal protein uL6 family. As to quaternary structure, part of the 50S ribosomal subunit.

Functionally, this protein binds to the 23S rRNA, and is important in its secondary structure. It is located near the subunit interface in the base of the L7/L12 stalk, and near the tRNA binding site of the peptidyltransferase center. The chain is Large ribosomal subunit protein uL6 from Gloeothece citriformis (strain PCC 7424) (Cyanothece sp. (strain PCC 7424)).